The sequence spans 211 residues: BAG family molecular chaperone regulator 2 (211 aa).

Position 2 is an N-acetylalanine (Ala2). 3 positions are modified to phosphoserine: Ser20, Ser31, and Ser73. Residues 20–61 (SMADRSSRLLESLDQLELRVEALREAATAVEQEKEILLEMIH) adopt a coiled-coil conformation. The BAG domain maps to 109 to 189 (SLKHATRIID…NIENSDKAIK (81 aa)).

In terms of assembly, binds to the ATPase domain of HSP/HSC70 chaperones. May interact with NWD1. Interacts with HSPA1A (via NBD), HSPA1B (via NBD) and HSPA8. May interact with DNJC9; the interaction seems to be histone-dependent.

Co-chaperone for HSP70 and HSC70 chaperone proteins. Acts as a nucleotide-exchange factor (NEF) promoting the release of ADP from the HSP70 and HSC70 proteins thereby triggering client/substrate protein release. The protein is BAG family molecular chaperone regulator 2 (BAG2) of Homo sapiens (Human).